The chain runs to 215 residues: ATP-dependent dethiobiotin synthetase BioD (215 aa).

Residue 13–18 participates in ATP binding; that stretch reads DIGKTV. Residue Thr-17 coordinates Mg(2+). Lys-38 is an active-site residue. Thr-42 serves as a coordination point for substrate. ATP contacts are provided by residues Asp-50, 115 to 118, and 175 to 176; these read EGAG and NH. 2 residues coordinate Mg(2+): Asp-50 and Glu-115.

Belongs to the dethiobiotin synthetase family. Homodimer. Requires Mg(2+) as cofactor.

The protein localises to the cytoplasm. The catalysed reaction is (7R,8S)-7,8-diammoniononanoate + CO2 + ATP = (4R,5S)-dethiobiotin + ADP + phosphate + 3 H(+). It functions in the pathway cofactor biosynthesis; biotin biosynthesis; biotin from 7,8-diaminononanoate: step 1/2. Its function is as follows. Catalyzes a mechanistically unusual reaction, the ATP-dependent insertion of CO2 between the N7 and N8 nitrogen atoms of 7,8-diaminopelargonic acid (DAPA, also called 7,8-diammoniononanoate) to form a ureido ring. In Neisseria meningitidis serogroup C (strain 053442), this protein is ATP-dependent dethiobiotin synthetase BioD.